Reading from the N-terminus, the 136-residue chain is Nucleoside diphosphate kinase (136 aa).

The ATP site is built by Lys10, Phe58, Arg86, Thr92, Arg104, and Asn114. His117 serves as the catalytic Pros-phosphohistidine intermediate.

Belongs to the NDK family. As to quaternary structure, homotetramer. The cofactor is Mg(2+).

The protein resides in the cytoplasm. It carries out the reaction a 2'-deoxyribonucleoside 5'-diphosphate + ATP = a 2'-deoxyribonucleoside 5'-triphosphate + ADP. The enzyme catalyses a ribonucleoside 5'-diphosphate + ATP = a ribonucleoside 5'-triphosphate + ADP. Major role in the synthesis of nucleoside triphosphates other than ATP. The ATP gamma phosphate is transferred to the NDP beta phosphate via a ping-pong mechanism, using a phosphorylated active-site intermediate. The sequence is that of Nucleoside diphosphate kinase from Corynebacterium diphtheriae (strain ATCC 700971 / NCTC 13129 / Biotype gravis).